The chain runs to 734 residues: Photosystem I P700 chlorophyll a apoprotein A2 (734 aa).

Transmembrane regions (helical) follow at residues 46-69, 135-158, 175-199, 273-291, 330-353, 369-395, 417-439, and 517-535; these read IFAS…FHVA, LYQG…LHLQ, LNHH…HVAI, IAHH…GHMY, LHFQ…QHMY, AALY…IFLI, AIIS…LYVH, and FLVH…LILV. The [4Fe-4S] cluster site is built by Cys559 and Cys568. Helical transmembrane passes span 575 to 596 and 643 to 665; these read AFYL…YWHW and LSVW…MFLI. Chlorophyll a-binding residues include His654, Met662, and Tyr670. Trp671 serves as a coordination point for phylloquinone. Residues 707–727 traverse the membrane as a helical segment; the sequence is VVGLAHFTVGYFLTYAAFLIA.

The protein belongs to the PsaA/PsaB family. As to quaternary structure, the PsaA/B heterodimer binds the P700 chlorophyll special pair and subsequent electron acceptors. PSI consists of a core antenna complex that captures photons, and an electron transfer chain that converts photonic excitation into a charge separation. The cyanobacterial PSI reaction center is composed of one copy each of PsaA,B,C,D,E,F,I,J,K,L,M and X, and forms trimeric complexes. PSI electron transfer chain: 5 chlorophyll a, 1 chlorophyll a', 2 phylloquinones and 3 4Fe-4S clusters. PSI core antenna: 90 chlorophyll a, 22 carotenoids, 3 phospholipids and 1 galactolipid. P700 is a chlorophyll a/chlorophyll a' dimer, A0 is one or more chlorophyll a, A1 is one or both phylloquinones and FX is a shared 4Fe-4S iron-sulfur center. serves as cofactor.

It is found in the cellular thylakoid membrane. It catalyses the reaction reduced [plastocyanin] + hnu + oxidized [2Fe-2S]-[ferredoxin] = oxidized [plastocyanin] + reduced [2Fe-2S]-[ferredoxin]. Its function is as follows. PsaA and PsaB bind P700, the primary electron donor of photosystem I (PSI), as well as the electron acceptors A0, A1 and FX. PSI is a plastocyanin/cytochrome c6-ferredoxin oxidoreductase, converting photonic excitation into a charge separation, which transfers an electron from the donor P700 chlorophyll pair to the spectroscopically characterized acceptors A0, A1, FX, FA and FB in turn. Oxidized P700 is reduced on the lumenal side of the thylakoid membrane by plastocyanin or cytochrome c6. The sequence is that of Photosystem I P700 chlorophyll a apoprotein A2 from Synechococcus elongatus (strain ATCC 33912 / PCC 7942 / FACHB-805) (Anacystis nidulans R2).